The primary structure comprises 355 residues: Probable dual-specificity RNA methyltransferase RlmN (355 aa).

Glu89 (proton acceptor) is an active-site residue. The 228-residue stretch at 95 to 322 (YENRKTVCLS…KRLGVPTSIR (228 aa)) folds into the Radical SAM core domain. Cys102 and Cys333 are oxidised to a cystine. Positions 109, 113, and 116 each coordinate [4Fe-4S] cluster. Residues 159–160 (GE), Ser191, 214–216 (SLH), and Asn290 contribute to the S-adenosyl-L-methionine site. Cys333 serves as the catalytic S-methylcysteine intermediate.

It belongs to the radical SAM superfamily. RlmN family. Requires [4Fe-4S] cluster as cofactor.

It localises to the cytoplasm. The enzyme catalyses adenosine(2503) in 23S rRNA + 2 reduced [2Fe-2S]-[ferredoxin] + 2 S-adenosyl-L-methionine = 2-methyladenosine(2503) in 23S rRNA + 5'-deoxyadenosine + L-methionine + 2 oxidized [2Fe-2S]-[ferredoxin] + S-adenosyl-L-homocysteine. It carries out the reaction adenosine(37) in tRNA + 2 reduced [2Fe-2S]-[ferredoxin] + 2 S-adenosyl-L-methionine = 2-methyladenosine(37) in tRNA + 5'-deoxyadenosine + L-methionine + 2 oxidized [2Fe-2S]-[ferredoxin] + S-adenosyl-L-homocysteine. In terms of biological role, specifically methylates position 2 of adenine 2503 in 23S rRNA and position 2 of adenine 37 in tRNAs. The polypeptide is Probable dual-specificity RNA methyltransferase RlmN (Thermus thermophilus (strain ATCC 27634 / DSM 579 / HB8)).